A 373-amino-acid polypeptide reads, in one-letter code: Peroxisomal biogenesis factor 3 (373 aa).

Residues 1–15 (MLRSVWNFLKRHKKK) lie on the Cytoplasmic side of the membrane. Positions 1–45 (MLRSVWNFLKRHKKKCIFLGTVLGGVYILGKYGQKKIREIQEREA) are targeting to peroxisomes. A helical membrane pass occupies residues 16 to 36 (CIFLGTVLGGVYILGKYGQKK). The Peroxisomal portion of the chain corresponds to 37 to 116 (IREIQEREAA…LKIISFTRST (80 aa)). A helical transmembrane segment spans residues 117–140 (VAVYSTCMLVVLLRVQLNIIGGYI). An interaction with PEX19 region spans residues 120-136 (YSTCMLVVLLRVQLNII). Over 141-373 (YLDNAAVGKN…AFSTPQQLEK (233 aa)) the chain is Cytoplasmic.

Belongs to the peroxin-3 family. In terms of assembly, interacts with PEX19. In terms of tissue distribution, found in all examined tissues.

It localises to the peroxisome membrane. Involved in peroxisome biosynthesis and integrity. Assembles membrane vesicles before the matrix proteins are translocated. As a docking factor for PEX19, is necessary for the import of peroxisomal membrane proteins in the peroxisomes. In Homo sapiens (Human), this protein is Peroxisomal biogenesis factor 3 (PEX3).